Consider the following 415-residue polypeptide: Tyrosine--tRNA ligase (415 aa).

Y40 contacts L-tyrosine. The short motif at 45-54 (ATAKSLHVGS) is the 'HIGH' region element. The L-tyrosine site is built by Y178 and Q182. Positions 238-242 (KMGKS) match the 'KMSKS' region motif. Position 241 (K241) interacts with ATP. The region spanning 350–414 (ASIVQLIVKT…GKKRHALVQL (65 aa)) is the S4 RNA-binding domain.

It belongs to the class-I aminoacyl-tRNA synthetase family. TyrS type 1 subfamily. Homodimer.

It is found in the cytoplasm. It carries out the reaction tRNA(Tyr) + L-tyrosine + ATP = L-tyrosyl-tRNA(Tyr) + AMP + diphosphate + H(+). Its function is as follows. Catalyzes the attachment of tyrosine to tRNA(Tyr) in a two-step reaction: tyrosine is first activated by ATP to form Tyr-AMP and then transferred to the acceptor end of tRNA(Tyr). This Ruegeria pomeroyi (strain ATCC 700808 / DSM 15171 / DSS-3) (Silicibacter pomeroyi) protein is Tyrosine--tRNA ligase.